Consider the following 693-residue polypeptide: Elongation factor G (693 aa).

The tr-type G domain maps to 8-282 (EKTRNIGIMA…AVIDYLPSPL (275 aa)). GTP is bound by residues 17–24 (AHVDAGKT), 81–85 (DTPGH), and 135–138 (NKMD).

This sequence belongs to the TRAFAC class translation factor GTPase superfamily. Classic translation factor GTPase family. EF-G/EF-2 subfamily.

The protein localises to the cytoplasm. Functionally, catalyzes the GTP-dependent ribosomal translocation step during translation elongation. During this step, the ribosome changes from the pre-translocational (PRE) to the post-translocational (POST) state as the newly formed A-site-bound peptidyl-tRNA and P-site-bound deacylated tRNA move to the P and E sites, respectively. Catalyzes the coordinated movement of the two tRNA molecules, the mRNA and conformational changes in the ribosome. This chain is Elongation factor G, found in Streptococcus pneumoniae (strain CGSP14).